Here is a 115-residue protein sequence, read N- to C-terminus: Large ribosomal subunit protein bL19 (115 aa).

This sequence belongs to the bacterial ribosomal protein bL19 family.

In terms of biological role, this protein is located at the 30S-50S ribosomal subunit interface and may play a role in the structure and function of the aminoacyl-tRNA binding site. The chain is Large ribosomal subunit protein bL19 from Francisella philomiragia subsp. philomiragia (strain ATCC 25017 / CCUG 19701 / FSC 153 / O#319-036).